A 324-amino-acid chain; its full sequence is Anthranilate phosphoribosyltransferase (324 aa).

5-phospho-alpha-D-ribose 1-diphosphate-binding positions include Gly-72, 75-76 (GD), Ser-80, 82-85 (NVST), 99-107 (KHGNVSITS), and Ser-111. Gly-72 contributes to the anthranilate binding site. Ser-84 is a Mg(2+) binding site. Asn-102 lines the anthranilate pocket. Position 157 (Arg-157) interacts with anthranilate. Mg(2+) is bound by residues Asp-215 and Glu-216.

This sequence belongs to the anthranilate phosphoribosyltransferase family. In terms of assembly, homodimer. Mg(2+) serves as cofactor.

The catalysed reaction is N-(5-phospho-beta-D-ribosyl)anthranilate + diphosphate = 5-phospho-alpha-D-ribose 1-diphosphate + anthranilate. Its pathway is amino-acid biosynthesis; L-tryptophan biosynthesis; L-tryptophan from chorismate: step 2/5. Functionally, catalyzes the transfer of the phosphoribosyl group of 5-phosphorylribose-1-pyrophosphate (PRPP) to anthranilate to yield N-(5'-phosphoribosyl)-anthranilate (PRA). In Pyrococcus abyssi (strain GE5 / Orsay), this protein is Anthranilate phosphoribosyltransferase.